The sequence spans 458 residues: GDP-fucose protein O-fucosyltransferase 3 (458 aa).

At 1 to 11 the chain is on the cytoplasmic side; it reads MRRISVKKLCS. The chain crosses the membrane as a helical; Signal-anchor for type II membrane protein span at residues 12–32; sequence FCLCACAFAFLVMTFQVIELL. Topologically, residues 33–458 are lumenal; the sequence is GQFEQTEHRQ…TQFWREVFTD (426 aa). N92, N150, and N300 each carry an N-linked (GlcNAc...) asparagine glycan. The cysteines at positions 371 and 374 are disulfide-linked. N445 carries an N-linked (GlcNAc...) asparagine glycan.

It belongs to the glycosyltransferase 10 family.

The protein localises to the endoplasmic reticulum membrane. It catalyses the reaction L-threonyl-[protein] + GDP-beta-L-fucose = 3-O-(alpha-L-fucosyl)-L-threonyl-[protein] + GDP + H(+). It carries out the reaction L-seryl-[protein] + GDP-beta-L-fucose = 3-O-(alpha-L-fucosyl)-L-seryl-[protein] + GDP + H(+). Its pathway is protein modification; protein glycosylation. Functionally, protein O-fucosyltransferase that specifically catalyzes O-fucosylation of serine or threonine residues in EMI domains of target proteins. Attaches fucose through an O-glycosidic linkage. O-fucosylation of EMI domain-containing proteins may be required for facilitating protein folding and secretion. This is GDP-fucose protein O-fucosyltransferase 3 (fut10) from Danio rerio (Zebrafish).